A 177-amino-acid polypeptide reads, in one-letter code: Large ribosomal subunit protein uL6 (177 aa).

The protein belongs to the universal ribosomal protein uL6 family. As to quaternary structure, part of the 50S ribosomal subunit.

In terms of biological role, this protein binds to the 23S rRNA, and is important in its secondary structure. It is located near the subunit interface in the base of the L7/L12 stalk, and near the tRNA binding site of the peptidyltransferase center. The sequence is that of Large ribosomal subunit protein uL6 from Vibrio cholerae serotype O1 (strain ATCC 39315 / El Tor Inaba N16961).